A 172-amino-acid chain; its full sequence is Small ribosomal subunit protein uS5 (172 aa).

In terms of domain architecture, S5 DRBM spans 16–79 (LKEKLVHINR…EDGKKNVVKV (64 aa)).

Belongs to the universal ribosomal protein uS5 family. As to quaternary structure, part of the 30S ribosomal subunit. Contacts proteins S4 and S8.

Functionally, with S4 and S12 plays an important role in translational accuracy. Located at the back of the 30S subunit body where it stabilizes the conformation of the head with respect to the body. The chain is Small ribosomal subunit protein uS5 from Prosthecochloris aestuarii (strain DSM 271 / SK 413).